The chain runs to 417 residues: NADH-quinone oxidoreductase subunit D 1 (417 aa).

It belongs to the complex I 49 kDa subunit family. NDH-1 is composed of 14 different subunits. Subunits NuoB, C, D, E, F, and G constitute the peripheral sector of the complex.

It is found in the cell membrane. It carries out the reaction a quinone + NADH + 5 H(+)(in) = a quinol + NAD(+) + 4 H(+)(out). NDH-1 shuttles electrons from NADH, via FMN and iron-sulfur (Fe-S) centers, to quinones in the respiratory chain. The immediate electron acceptor for the enzyme in this species is believed to be ubiquinone. Couples the redox reaction to proton translocation (for every two electrons transferred, four hydrogen ions are translocated across the cytoplasmic membrane), and thus conserves the redox energy in a proton gradient. The chain is NADH-quinone oxidoreductase subunit D 1 from Roseiflexus castenholzii (strain DSM 13941 / HLO8).